The chain runs to 210 residues: MQAQIVNKIFEIFSKNNPNPKTELIYKNDFTLLVAVILSAQATDISVNLATKSLFATYDTPEKILELGEEGLKKYIKSIGLFNSKAKNIIALCKILISNYQASVPNDFKALIKLPGVGRKTANVVLNCLFGMPTMAVDTHVFRVANRIGLAKGDTPEIVENELLQIIDTKWLTHAHHWLILHGRYICKARKPDCDICPIKEYCDYYFNLK.

The 20-residue stretch at 108–127 folds into the HhH domain; the sequence is FKALIKLPGVGRKTANVVLN. Residues C187, C194, C197, and C203 each contribute to the [4Fe-4S] cluster site.

Belongs to the Nth/MutY family. [4Fe-4S] cluster is required as a cofactor.

The enzyme catalyses 2'-deoxyribonucleotide-(2'-deoxyribose 5'-phosphate)-2'-deoxyribonucleotide-DNA = a 3'-end 2'-deoxyribonucleotide-(2,3-dehydro-2,3-deoxyribose 5'-phosphate)-DNA + a 5'-end 5'-phospho-2'-deoxyribonucleoside-DNA + H(+). In terms of biological role, DNA repair enzyme that has both DNA N-glycosylase activity and AP-lyase activity. The DNA N-glycosylase activity releases various damaged pyrimidines from DNA by cleaving the N-glycosidic bond, leaving an AP (apurinic/apyrimidinic) site. The AP-lyase activity cleaves the phosphodiester bond 3' to the AP site by a beta-elimination, leaving a 3'-terminal unsaturated sugar and a product with a terminal 5'-phosphate. This is Endonuclease III from Rickettsia conorii (strain ATCC VR-613 / Malish 7).